A 222-amino-acid chain; its full sequence is Protein-L-isoaspartate O-methyltransferase (222 aa).

The active site involves S69.

It belongs to the methyltransferase superfamily. L-isoaspartyl/D-aspartyl protein methyltransferase family.

The protein localises to the cytoplasm. It carries out the reaction [protein]-L-isoaspartate + S-adenosyl-L-methionine = [protein]-L-isoaspartate alpha-methyl ester + S-adenosyl-L-homocysteine. Catalyzes the methyl esterification of L-isoaspartyl residues in peptides and proteins that result from spontaneous decomposition of normal L-aspartyl and L-asparaginyl residues. It plays a role in the repair and/or degradation of damaged proteins. This is Protein-L-isoaspartate O-methyltransferase from Nitrosomonas eutropha (strain DSM 101675 / C91 / Nm57).